The primary structure comprises 402 residues: Sulfate adenylyltransferase (402 aa).

This sequence belongs to the sulfate adenylyltransferase family.

It carries out the reaction sulfate + ATP + H(+) = adenosine 5'-phosphosulfate + diphosphate. Its pathway is sulfur metabolism; hydrogen sulfide biosynthesis; sulfite from sulfate: step 1/3. The sequence is that of Sulfate adenylyltransferase from Thiobacillus denitrificans (strain ATCC 25259 / T1).